The following is a 481-amino-acid chain: NADH-quinone oxidoreductase subunit N (481 aa).

14 helical membrane-spanning segments follow: residues 11–31 (AYPE…DLFA), 37–57 (YLAF…TCGI), 74–94 (AMSD…LIYS), 103–123 (LLKG…MVMV), 128–148 (LITL…MVAL), 162–182 (FFVL…MLYG), 205–225 (IFII…SAVP), 238–258 (PTAV…GFVM), 272–292 (WQGM…IAAI), 300–320 (MLAY…IAAG), 328–348 (MFYV…IMLV), 371–391 (LAFM…MIGF), 405–425 (GYIW…FYYL), and 457–477 (LAII…LSAI).

This sequence belongs to the complex I subunit 2 family. As to quaternary structure, NDH-1 is composed of 14 different subunits. Subunits NuoA, H, J, K, L, M, N constitute the membrane sector of the complex.

It is found in the cell inner membrane. It catalyses the reaction a quinone + NADH + 5 H(+)(in) = a quinol + NAD(+) + 4 H(+)(out). Functionally, NDH-1 shuttles electrons from NADH, via FMN and iron-sulfur (Fe-S) centers, to quinones in the respiratory chain. The immediate electron acceptor for the enzyme in this species is believed to be ubiquinone. Couples the redox reaction to proton translocation (for every two electrons transferred, four hydrogen ions are translocated across the cytoplasmic membrane), and thus conserves the redox energy in a proton gradient. The chain is NADH-quinone oxidoreductase subunit N from Nitrosomonas europaea (strain ATCC 19718 / CIP 103999 / KCTC 2705 / NBRC 14298).